Reading from the N-terminus, the 412-residue chain is Lipoyl synthase, mitochondrial (412 aa).

Cys127, Cys132, Cys138, Cys159, Cys163, Cys166, and Ser375 together coordinate [4Fe-4S] cluster. One can recognise a Radical SAM core domain in the interval 142–364 (SDDEGTATAT…EKEAMDMGFL (223 aa)).

This sequence belongs to the radical SAM superfamily. Lipoyl synthase family. It depends on [4Fe-4S] cluster as a cofactor.

It is found in the mitochondrion. It carries out the reaction [[Fe-S] cluster scaffold protein carrying a second [4Fe-4S](2+) cluster] + N(6)-octanoyl-L-lysyl-[protein] + 2 oxidized [2Fe-2S]-[ferredoxin] + 2 S-adenosyl-L-methionine + 4 H(+) = [[Fe-S] cluster scaffold protein] + N(6)-[(R)-dihydrolipoyl]-L-lysyl-[protein] + 4 Fe(3+) + 2 hydrogen sulfide + 2 5'-deoxyadenosine + 2 L-methionine + 2 reduced [2Fe-2S]-[ferredoxin]. The protein operates within protein modification; protein lipoylation via endogenous pathway; protein N(6)-(lipoyl)lysine from octanoyl-[acyl-carrier-protein]: step 2/2. Functionally, catalyzes the radical-mediated insertion of two sulfur atoms into the C-6 and C-8 positions of the octanoyl moiety bound to the lipoyl domains of lipoate-dependent enzymes, thereby converting the octanoylated domains into lipoylated derivatives. The protein is Lipoyl synthase, mitochondrial of Leishmania infantum.